Reading from the N-terminus, the 374-residue chain is MKPALTLHDRTLKLNRFPIRKIETLQAWDAADEYLINHTHDMELDPQRPILILNDSFGALSCWFAERANVTTVTDSFVAKQGCIANLTANQLPSVNIIDCLAELPKNPQLVLIKLPKNNRLLTWQLQQLCHLLPEDCRVIGAAKVKDIHTSTLKLCDKYLGETKTSLAVKKARLVFIKPNASLAKPMPEAKAWDVPEHGIRLSNHANVFSGESLDIGARLLLNHIPQDFKYKDIIDLGCGNGVIGIKAARRNPQAKITCVDESFMAAASCTENAKQNLEAPEQLTAIVTDCLADIEHSSADLVLCNPPFHQQTTITDHIAWQMFCDAKQVLRPKGELIVIGNRQLGYDDKLKRLFGNVEIIAQNDKFIVYQSVK.

This sequence belongs to the methyltransferase superfamily. RlmG family.

Its subcellular location is the cytoplasm. It carries out the reaction guanosine(1835) in 23S rRNA + S-adenosyl-L-methionine = N(2)-methylguanosine(1835) in 23S rRNA + S-adenosyl-L-homocysteine + H(+). Functionally, specifically methylates the guanine in position 1835 (m2G1835) of 23S rRNA. This is Ribosomal RNA large subunit methyltransferase G from Photobacterium profundum (strain SS9).